We begin with the raw amino-acid sequence, 291 residues long: MTSAMKKIQPEAFSEKSSDSQASVSGAKSSSFYIGMRVLPPAEREAMYAIYNFCRQVDDIADDLEGSQEERKQALDAWRHDINALYAGEPCGQAAFLKEPVARFHLRQEDFIAVIDGMAMDLKGPIVFPDEATLDLYCDRVASAVGRLSVYVFGMDPNIGESLAYHLGRALQLTNILRDIDEDAEIGRCYLPREPLEKAGIPLDIEKALADPRLDKVCRDLAWQAEGHYAASDHIIHNRPKGYLIAPRLMAAAYSALLRKMLAQGWKNPRKKVKHNKLALLWTLLRLKVTS.

The disordered stretch occupies residues 1-23; sequence MTSAMKKIQPEAFSEKSSDSQAS.

The protein belongs to the phytoene/squalene synthase family. HpnD subfamily.

The enzyme catalyses 2 (2E,6E)-farnesyl diphosphate = presqualene diphosphate + diphosphate. Its pathway is secondary metabolite biosynthesis; hopanoid biosynthesis. In terms of biological role, involved in the biosynthesis of the hopanoid precursor squalene (SQ) from farnesyl diphosphate (FPP). Catalyzes the first step, the formation of presqualene diphosphate (PSPP) from two molecules of FPP. The protein is Presqualene diphosphate synthase of Zymomonas mobilis subsp. mobilis (strain ATCC 31821 / ZM4 / CP4).